A 184-amino-acid chain; its full sequence is ADP-ribosylation factor-like protein 2 (184 aa).

The N-myristoyl glycine moiety is linked to residue Gly-2. GTP is bound by residues 23 to 30 (GLDNAGKT), 66 to 70 (DVGGQ), Gly-68, and 125 to 128 (NKSD).

It belongs to the small GTPase superfamily. Arf family. As to expression, in the embryo, strongly expressed in migrating hypodermal cells. Shortly before the beginning of elongation, expressed in many developing neurons where it persists throughout adulthood. In the larva, highly expressed in migrating hypodermal cells and the uterus. Also expressed in vulva, spermatheca, sheath cells, distal tips cells and proctoderm of the male tail.

It is found in the cytoplasm. Its subcellular location is the cell membrane. It localises to the cytoskeleton. The protein resides in the microtubule organizing center. The protein localises to the centrosome. Functionally, GTP-binding protein that functions in embryogenesis, cytokinesis, germline development and microtubulule cytoskeleton dynamics. This chain is ADP-ribosylation factor-like protein 2 (evl-20), found in Caenorhabditis elegans.